An 856-amino-acid chain; its full sequence is uncharacterized protein (856 aa).

This is an uncharacterized protein from Rickettsia felis (strain ATCC VR-1525 / URRWXCal2) (Rickettsia azadi).